A 292-amino-acid chain; its full sequence is Shikimate dehydrogenase (NADP(+)) (292 aa).

Shikimate is bound by residues 22-24 (SLS) and Ser69. Lys73 (proton acceptor) is an active-site residue. Asn94 and Asp111 together coordinate shikimate. Residues 135–139 (GVGGA) and Ile236 each bind NADP(+). Tyr238 is a shikimate binding site. Gly260 contributes to the NADP(+) binding site.

This sequence belongs to the shikimate dehydrogenase family. In terms of assembly, homodimer.

It carries out the reaction shikimate + NADP(+) = 3-dehydroshikimate + NADPH + H(+). It functions in the pathway metabolic intermediate biosynthesis; chorismate biosynthesis; chorismate from D-erythrose 4-phosphate and phosphoenolpyruvate: step 4/7. Its function is as follows. Involved in the biosynthesis of the chorismate, which leads to the biosynthesis of aromatic amino acids. Catalyzes the reversible NADPH linked reduction of 3-dehydroshikimate (DHSA) to yield shikimate (SA). The protein is Shikimate dehydrogenase (NADP(+)) of Streptococcus pyogenes serotype M28 (strain MGAS6180).